The primary structure comprises 1363 residues: Spike glycoprotein (1363 aa).

Positions 1 to 13 (MFLILLISLPMAF) are cleaved as a signal peptide. Topologically, residues 14–1307 (AVIGDLKCTT…GTYEYYVKWP (1294 aa)) are extracellular. The BetaCoV S1-NTD domain occupies 15-298 (VIGDLKCTTV…DFMSEIKCKT (284 aa)). 5 disulfides stabilise this stretch: Cys21-Cys165, Cys160-Cys193, Cys172-Cys252, Cys286-Cys296, and Cys331-Cys356. N-linked (GlcNAc...) asparagine; by host glycosylation is found at Asn59 and Asn133. Residue Asn198 is glycosylated (N-linked (GlcNAc...) asparagine; by host). The 289-residue stretch at 329–617 (PDCNIEAWLN…DVNSGTTCST (289 aa)) folds into the BetaCoV S1-CTD domain. An N-linked (GlcNAc...) asparagine; by host glycan is attached at Asn359. 2 disulfide bridges follow: Cys374/Cys427 and Cys386/Cys615. N-linked (GlcNAc...) asparagine; by host glycosylation is found at Asn437, Asn649, Asn676, Asn696, Asn714, Asn739, and Asn788. Fusion peptide regions lie at residues 914 to 935 (SAIEDLLFSKVKLSDVGFVEAY) and 933 to 953 (EAYNNCTGGAEIRDLICVQSY). An N-linked (GlcNAc...) asparagine; by host glycan is attached at Asn937. An intrachain disulfide couples Cys938 to Cys949. Residues 1014–1064 (QKLIANAFNNALDAIQEGFDATNSALVKIQAVVNANAEALNNLLQQLSNRF) are heptad repeat 1. Positions 1043-1087 (QAVVNANAEALNNLLQQLSNRFGAISSSLQEILSRLDALEAQAQI) form a coiled coil. Residues Asn1194, Asn1224, Asn1234, Asn1253, Asn1267, and Asn1288 are each glycosylated (N-linked (GlcNAc...) asparagine; by host). The heptad repeat 2 stretch occupies residues 1258–1296 (APDLSLDYINVTFLDLQDEMNRLQEAIKVLNQSYINLKD). A coiled-coil region spans residues 1269–1297 (TFLDLQDEMNRLQEAIKVLNQSYINLKDI). A helical membrane pass occupies residues 1308–1328 (WYVWLLIGFAGVAMLVLLFFI). At 1329–1363 (CCCTGCGTSCFKICGGCCDDYTGHQELVIKTSHDD) the chain is on the cytoplasmic side. The short motif at 1359 to 1363 (TSHDD) is the KxHxx element.

Belongs to the betacoronaviruses spike protein family. In terms of assembly, homotrimer; each monomer consists of a S1 and a S2 subunit. The resulting peplomers protrude from the virus surface as spikes. In terms of processing, specific enzymatic cleavages in vivo yield mature proteins. The precursor is processed into S1 and S2 by host cell furin or another cellular protease to yield the mature S1 and S2 proteins. Additionally, a second cleavage leads to the release of a fusion peptide after viral attachment to host cell receptor. The cytoplasmic Cys-rich domain is palmitoylated. Spike glycoprotein is digested within host endosomes.

Its subcellular location is the virion membrane. It is found in the host endoplasmic reticulum-Golgi intermediate compartment membrane. The protein localises to the host cell membrane. In terms of biological role, attaches the virion to the cell membrane by interacting with host receptor, initiating the infection. Functionally, mediates fusion of the virion and cellular membranes by acting as a class I viral fusion protein. Under the current model, the protein has at least three conformational states: pre-fusion native state, pre-hairpin intermediate state, and post-fusion hairpin state. During viral and target cell membrane fusion, the coiled coil regions (heptad repeats) assume a trimer-of-hairpins structure, positioning the fusion peptide in close proximity to the C-terminal region of the ectodomain. The formation of this structure appears to drive apposition and subsequent fusion of viral and target cell membranes. Its function is as follows. Acts as a viral fusion peptide which is unmasked following S2 cleavage occurring upon virus endocytosis. In Bos taurus (Bovine), this protein is Spike glycoprotein.